A 263-amino-acid polypeptide reads, in one-letter code: Small ribosomal subunit protein eS4 (263 aa).

The S4 RNA-binding domain occupies 42 to 104 (LPLIVFLRNR…TGEHFRLVYD (63 aa)).

Belongs to the eukaryotic ribosomal protein eS4 family.

The sequence is that of Small ribosomal subunit protein eS4 (RPS4Y1) from Pan paniscus (Pygmy chimpanzee).